Consider the following 310-residue polypeptide: Delta(1)-pyrroline-2-carboxylate reductase 1 (310 aa).

The protein belongs to the ornithine cyclodeaminase/mu-crystallin family.

It catalyses the reaction L-proline + NAD(+) = 1-pyrroline-2-carboxylate + NADH + H(+). The enzyme catalyses L-proline + NADP(+) = 1-pyrroline-2-carboxylate + NADPH + H(+). In terms of biological role, catalyzes the reduction of Delta(1)-pyrroline-2-carboxylate (Pyr2C) to L-proline, using NADPH as the electron donor. May be involved in a degradation pathway that converts trans-3-hydroxy-L-proline (t3LHyp) to L-proline. The sequence is that of Delta(1)-pyrroline-2-carboxylate reductase 1 from Burkholderia multivorans (strain ATCC 17616 / 249).